We begin with the raw amino-acid sequence, 96 residues long: Large ribosomal subunit protein uL23 (96 aa).

Belongs to the universal ribosomal protein uL23 family. Part of the 50S ribosomal subunit. Contacts protein L29, and trigger factor when it is bound to the ribosome.

One of the early assembly proteins it binds 23S rRNA. One of the proteins that surrounds the polypeptide exit tunnel on the outside of the ribosome. Forms the main docking site for trigger factor binding to the ribosome. The protein is Large ribosomal subunit protein uL23 of Syntrophus aciditrophicus (strain SB).